A 126-amino-acid polypeptide reads, in one-letter code: Probable prefoldin subunit 6 (126 aa).

The protein belongs to the prefoldin subunit beta family. In terms of assembly, heterohexamer of two PFD-alpha type and four PFD-beta type subunits. Expressed in embryonic blastomeres and gonads.

The protein localises to the cytoplasm. Its function is as follows. Binds specifically to cytosolic chaperonin (c-CPN) and transfers target proteins to it. Binds to nascent polypeptide chain and promotes folding in an environment in which there are many competing pathways for nonnative proteins. Required for positioning of the mitotic spindle. The protein is Probable prefoldin subunit 6 (pfd-6) of Caenorhabditis elegans.